The following is a 137-amino-acid chain: Fatty acid-binding protein homolog 8 (137 aa).

The Nuclear localization signal signature appears at 24–34 (KEIGVGLLIRK).

This sequence belongs to the calycin superfamily. Fatty-acid binding protein (FABP) family. Monomer. As to expression, intestine.

The protein localises to the lysosome. The protein resides in the nucleus. In terms of biological role, lysosomal lipid chaperone which binds to a wide range of unsaturated fatty acids, including high affinity binding to oleic acid and oleoylethanolamide, to transport them into the nucleus. As part of a lysosome-to-nucleus retrograde lipid signaling pathway, translocates into the nucleus where it activates the transcription of genes promoting longevity and activation of mitochondrial beta oxidation. This chain is Fatty acid-binding protein homolog 8, found in Caenorhabditis elegans.